We begin with the raw amino-acid sequence, 351 residues long: MENNILELRNVTKEYDGQVVLKGISFNVKEGEFITLLGPSGCGKTTILKIIGGSQKPNSGEILFEDKNLIPIPINKRQFNTIFQSYALFPHLNVFDNVAFGLTIKKTKKDIIEREVMRQIRQVGLEGYENKKIDELSGGQKQRIAIARALVMKPKVLLLDEPMAALDVKLRKTMQEELKRLQQDIGITFIMVSHDQEEALSMSDRIVVMNQGTIQQIGTPEEIYNEPENAWVANFIGSSNIITDGIFLEDNKIKFDGKVFECIDTNFGENESSIDIIIRPEDIIIKNPNNGFFNAKVIKTTFKGIHWEIVVETSKKRQWIIHTINEYDVDQQVSIKWKPANVHVMWKEVDN.

The region spanning 6-236 is the ABC transporter domain; it reads LELRNVTKEY…PENAWVANFI (231 aa). Position 38–45 (38–45) interacts with ATP; it reads GPSGCGKT.

Belongs to the ABC transporter superfamily. Spermidine/putrescine importer (TC 3.A.1.11.1) family. In terms of assembly, the complex is composed of two ATP-binding proteins (PotA), two transmembrane proteins (PotB and PotC) and a solute-binding protein (PotD).

The protein localises to the cell membrane. The enzyme catalyses ATP + H2O + polyamine-[polyamine-binding protein]Side 1 = ADP + phosphate + polyamineSide 2 + [polyamine-binding protein]Side 1.. In terms of biological role, part of the ABC transporter complex PotABCD involved in spermidine/putrescine import. Responsible for energy coupling to the transport system. The sequence is that of Spermidine/putrescine import ATP-binding protein PotA from Mycoplasma mycoides subsp. mycoides SC (strain CCUG 32753 / NCTC 10114 / PG1).